The chain runs to 371 residues: Gustatory receptor-like 65a (371 aa).

Residues 1–13 are Cytoplasmic-facing; it reads MREVNLLNRFTRQ. A helical transmembrane segment spans residues 14-34; sequence FLFLIVLVTQICGVATFVYNS. At 35 to 42 the chain is on the extracellular side; it reads KAQCFRQS. Residues 43–63 traverse the membrane as a helical segment; sequence GFLRFYSSLVLIFLALFLIVT. Over 64–72 the chain is Cytoplasmic; that stretch reads TSKMFHNLQ. A helical membrane pass occupies residues 73 to 93; sequence AVWPYVVGSVIILVVRIHGLL. Topologically, residues 94–126 are extracellular; that stretch reads ESAEIVELLNQMLRIMRQVNLMARHPNLFRLKH. A helical transmembrane segment spans residues 127-147; sequence LLLLLLALQNLLRSLNTIVGI. Over 148-161 the chain is Cytoplasmic; the sequence is SNHSAEAYDSFLNS. Residues 162–182 form a helical membrane-spanning segment; sequence VILLIILAVLLSFLLQITINI. At 183–251 the chain is on the extracellular side; it reads CLFVVLIATY…FHITVRIIRH (69 aa). A helical membrane pass occupies residues 252–272; sequence FRFHWLCAIIYGLLPFFSLTA. Residues 273–277 are Cytoplasmic-facing; that stretch reads KDQNG. Residues 278-298 form a helical membrane-spanning segment; sequence FNFLIISALNIIFQWTIFAIL. The Extracellular portion of the chain corresponds to 299 to 371; it reads SRESRITRSL…FVNRLEYLHI (73 aa).

The protein localises to the cell membrane. This chain is Gustatory receptor-like 65a, found in Drosophila melanogaster (Fruit fly).